A 446-amino-acid chain; its full sequence is Chromosomal replication initiator protein DnaA (446 aa).

The domain I, interacts with DnaA modulators stretch occupies residues 1-72; sequence MENILDLWNQ…ADTIYELTGE (72 aa). The domain II stretch occupies residues 72-109; it reads EELSVKFVIPQNQDEENFLPKPQVKKAAKEEPSDFPQS. Residues 110–326 are domain III, AAA+ region; sequence MLNPKYTFDT…GALIRVVAYS (217 aa). Residues G154, G156, K157, and T158 each coordinate ATP. Positions 327 to 446 are domain IV, binds dsDNA; the sequence is SLINKDINAD…QVKEIKELLK (120 aa).

It belongs to the DnaA family. In terms of assembly, oligomerizes as a right-handed, spiral filament on DNA at oriC.

The protein resides in the cytoplasm. Plays an essential role in the initiation and regulation of chromosomal replication. ATP-DnaA binds to the origin of replication (oriC) to initiate formation of the DNA replication initiation complex once per cell cycle. Binds the DnaA box (a 9 base pair repeat at the origin) and separates the double-stranded (ds)DNA. Forms a right-handed helical filament on oriC DNA; dsDNA binds to the exterior of the filament while single-stranded (ss)DNA is stabiized in the filament's interior. The ATP-DnaA-oriC complex binds and stabilizes one strand of the AT-rich DNA unwinding element (DUE), permitting loading of DNA polymerase. After initiation quickly degrades to an ADP-DnaA complex that is not apt for DNA replication. Binds acidic phospholipids. The polypeptide is Chromosomal replication initiator protein DnaA (Bacillus velezensis (strain DSM 23117 / BGSC 10A6 / LMG 26770 / FZB42) (Bacillus amyloliquefaciens subsp. plantarum)).